The sequence spans 185 residues: Ribosome-recycling factor (185 aa).

This sequence belongs to the RRF family.

Its subcellular location is the cytoplasm. Responsible for the release of ribosomes from messenger RNA at the termination of protein biosynthesis. May increase the efficiency of translation by recycling ribosomes from one round of translation to another. The protein is Ribosome-recycling factor of Thermotoga sp. (strain RQ2).